The sequence spans 614 residues: UvrABC system protein C (614 aa).

Residues 12–91 (ESPGVYLMKG…IKKHRPRYNL (80 aa)) form the GIY-YIG domain. In terms of domain architecture, UVR spans 201 to 236 (RDLLKTYRERMASAAANERYEEAARYRDLIRAIEVT).

The protein belongs to the UvrC family. As to quaternary structure, interacts with UvrB in an incision complex.

It is found in the cytoplasm. In terms of biological role, the UvrABC repair system catalyzes the recognition and processing of DNA lesions. UvrC both incises the 5' and 3' sides of the lesion. The N-terminal half is responsible for the 3' incision and the C-terminal half is responsible for the 5' incision. This chain is UvrABC system protein C, found in Geobacter metallireducens (strain ATCC 53774 / DSM 7210 / GS-15).